We begin with the raw amino-acid sequence, 259 residues long: Small ribosomal subunit protein eS4 (259 aa).

One can recognise an S4 RNA-binding domain in the interval 41–105 (LPLSVLLKER…TDQSFRILYD (65 aa)). Phosphothreonine is present on Thr248. Ser258 is subject to Phosphoserine.

It belongs to the eukaryotic ribosomal protein eS4 family.

In Tetrahymena thermophila, this protein is Small ribosomal subunit protein eS4.